We begin with the raw amino-acid sequence, 278 residues long: Tryptophan synthase alpha chain (278 aa).

Residues Glu49 and Asp60 each act as proton acceptor in the active site.

This sequence belongs to the TrpA family. As to quaternary structure, tetramer of two alpha and two beta chains.

It catalyses the reaction (1S,2R)-1-C-(indol-3-yl)glycerol 3-phosphate + L-serine = D-glyceraldehyde 3-phosphate + L-tryptophan + H2O. The protein operates within amino-acid biosynthesis; L-tryptophan biosynthesis; L-tryptophan from chorismate: step 5/5. Functionally, the alpha subunit is responsible for the aldol cleavage of indoleglycerol phosphate to indole and glyceraldehyde 3-phosphate. This Rhodopirellula baltica (strain DSM 10527 / NCIMB 13988 / SH1) protein is Tryptophan synthase alpha chain.